We begin with the raw amino-acid sequence, 160 residues long: Ribosomal RNA large subunit methyltransferase H (160 aa).

L76 and G108 together coordinate S-adenosyl-L-methionine.

This sequence belongs to the RNA methyltransferase RlmH family. In terms of assembly, homodimer.

It localises to the cytoplasm. It carries out the reaction pseudouridine(1915) in 23S rRNA + S-adenosyl-L-methionine = N(3)-methylpseudouridine(1915) in 23S rRNA + S-adenosyl-L-homocysteine + H(+). In terms of biological role, specifically methylates the pseudouridine at position 1915 (m3Psi1915) in 23S rRNA. This Rhodopseudomonas palustris (strain BisB18) protein is Ribosomal RNA large subunit methyltransferase H.